The following is a 483-amino-acid chain: Siroheme synthase (483 aa).

The segment at 1–203 (MNYFPIFANL…RQNTLAEREL (203 aa)) is precorrin-2 dehydrogenase /sirohydrochlorin ferrochelatase. Residues 22–23 (AV) and 43–44 (KH) contribute to the NAD(+) site. Position 128 is a phosphoserine (S128). The uroporphyrinogen-III C-methyltransferase stretch occupies residues 214–483 (GFVSLVGAGP…LGTGQEQQAA (270 aa)). P223 provides a ligand contact to S-adenosyl-L-methionine. D246 functions as the Proton acceptor in the catalytic mechanism. K268 serves as the catalytic Proton donor. S-adenosyl-L-methionine-binding positions include 299–301 (GGD), V304, 329–330 (TA), M381, and G410.

It in the N-terminal section; belongs to the precorrin-2 dehydrogenase / sirohydrochlorin ferrochelatase family. The protein in the C-terminal section; belongs to the precorrin methyltransferase family.

It carries out the reaction uroporphyrinogen III + 2 S-adenosyl-L-methionine = precorrin-2 + 2 S-adenosyl-L-homocysteine + H(+). It catalyses the reaction precorrin-2 + NAD(+) = sirohydrochlorin + NADH + 2 H(+). The catalysed reaction is siroheme + 2 H(+) = sirohydrochlorin + Fe(2+). It participates in cofactor biosynthesis; adenosylcobalamin biosynthesis; precorrin-2 from uroporphyrinogen III: step 1/1. It functions in the pathway cofactor biosynthesis; adenosylcobalamin biosynthesis; sirohydrochlorin from precorrin-2: step 1/1. The protein operates within porphyrin-containing compound metabolism; siroheme biosynthesis; precorrin-2 from uroporphyrinogen III: step 1/1. Its pathway is porphyrin-containing compound metabolism; siroheme biosynthesis; siroheme from sirohydrochlorin: step 1/1. It participates in porphyrin-containing compound metabolism; siroheme biosynthesis; sirohydrochlorin from precorrin-2: step 1/1. Functionally, multifunctional enzyme that catalyzes the SAM-dependent methylations of uroporphyrinogen III at position C-2 and C-7 to form precorrin-2 via precorrin-1. Then it catalyzes the NAD-dependent ring dehydrogenation of precorrin-2 to yield sirohydrochlorin. Finally, it catalyzes the ferrochelation of sirohydrochlorin to yield siroheme. The chain is Siroheme synthase from Neisseria meningitidis serogroup C / serotype 2a (strain ATCC 700532 / DSM 15464 / FAM18).